Consider the following 238-residue polypeptide: ATP-dependent dethiobiotin synthetase BioD (238 aa).

12 to 17 (EVGKTV) contacts ATP. Thr16 is a Mg(2+) binding site. Lys37 is a catalytic residue. A substrate-binding site is contributed by Thr41. ATP is bound by residues Asp50, 109–112 (EGAG), 170–171 (GS), and 200–202 (PAG). Asp50 and Glu109 together coordinate Mg(2+).

The protein belongs to the dethiobiotin synthetase family. Homodimer. It depends on Mg(2+) as a cofactor.

The protein localises to the cytoplasm. The enzyme catalyses (7R,8S)-7,8-diammoniononanoate + CO2 + ATP = (4R,5S)-dethiobiotin + ADP + phosphate + 3 H(+). It functions in the pathway cofactor biosynthesis; biotin biosynthesis; biotin from 7,8-diaminononanoate: step 1/2. Functionally, catalyzes a mechanistically unusual reaction, the ATP-dependent insertion of CO2 between the N7 and N8 nitrogen atoms of 7,8-diaminopelargonic acid (DAPA, also called 7,8-diammoniononanoate) to form a ureido ring. This chain is ATP-dependent dethiobiotin synthetase BioD, found in Parafrankia sp. (strain EAN1pec).